Here is a 533-residue protein sequence, read N- to C-terminus: ATP synthase F(1) complex catalytic subunit beta, mitochondrial (533 aa).

Residues 1-53 (MLGLAGRCSAAAASAARPALRRAAGPSHGFLPLLLSRGAGPAAAVGARRDHAA) constitute a mitochondrion transit peptide. The ADP site is built by glycine 214, valine 215, glycine 216, lysine 217, threonine 218, and valine 219. Glycine 214 serves as a coordination point for ATP. Phosphate is bound by residues glycine 214, valine 215, glycine 216, lysine 217, and threonine 218. 4 residues coordinate ATP: glycine 216, lysine 217, threonine 218, and valine 219. Residue threonine 218 participates in Mg(2+) binding. Glutamate 243 is a Mg(2+) binding site. An ATP-binding site is contributed by arginine 244.

Homotrimer. Component of the ATP synthase complex composed at least of ATP5F1A/subunit alpha, ATP5F1B/subunit beta, ATP5MC1/subunit c (homooctomer), MT-ATP6/subunit a, MT-ATP8/subunit 8, ATP5ME/subunit e, ATP5MF/subunit f, ATP5MG/subunit g, ATP5MK/subunit k, ATP5MJ/subunit j, ATP5F1C/subunit gamma, ATP5F1D/subunit delta, ATP5F1E/subunit epsilon, ATP5PF/subunit F6, ATP5PB/subunit b, ATP5PD/subunit d, ATP5PO/subunit OSCP. ATP synthase complex consists of a soluble F(1) head domain (subunits alpha(3) and beta(3)) - the catalytic core - and a membrane F(0) domain - the membrane proton channel (subunits c, a, 8, e, f, g, k and j). These two domains are linked by a central stalk (subunits gamma, delta, and epsilon) rotating inside the F1 region and a stationary peripheral stalk (subunits F6, b, d, and OSCP).

The protein localises to the mitochondrion inner membrane. It catalyses the reaction ATP + H2O + 4 H(+)(in) = ADP + phosphate + 5 H(+)(out). In terms of biological role, catalytic subunit beta, of the mitochondrial membrane ATP synthase complex (F(1)F(0) ATP synthase or Complex V) that produces ATP from ADP in the presence of a proton gradient across the membrane which is generated by electron transport complexes of the respiratory chain. ATP synthase complex consist of a soluble F(1) head domain - the catalytic core - and a membrane F(1) domain - the membrane proton channel. These two domains are linked by a central stalk rotating inside the F(1) region and a stationary peripheral stalk. During catalysis, ATP synthesis in the catalytic domain of F(1) is coupled via a rotary mechanism of the central stalk subunits to proton translocation. In vivo, can only synthesize ATP although its ATP hydrolase activity can be activated artificially in vitro. With the subunit alpha (ATP5F1A), forms the catalytic core in the F(1) domain. The sequence is that of ATP synthase F(1) complex catalytic subunit beta, mitochondrial from Gallus gallus (Chicken).